The primary structure comprises 86 residues: Large ribosomal subunit protein bL31 (86 aa).

The segment at 64-86 is disordered; sequence KYGMGSANSSESKDQKEEKDSKK. The segment covering 74 to 86 has biased composition (basic and acidic residues); the sequence is ESKDQKEEKDSKK.

The protein belongs to the bacterial ribosomal protein bL31 family. Type A subfamily. In terms of assembly, part of the 50S ribosomal subunit.

Functionally, binds the 23S rRNA. The chain is Large ribosomal subunit protein bL31 from Prochlorococcus marinus (strain MIT 9301).